The primary structure comprises 304 residues: Probable aspartoacylase (304 aa).

The Zn(2+) site is built by His-13 and Glu-16. Substrate contacts are provided by residues Arg-55 and 62-63 (NR). Residue His-105 coordinates Zn(2+). Residues Glu-163 and Tyr-273 each coordinate substrate.

The protein belongs to the AspA/AstE family. Aspartoacylase subfamily. The cofactor is Zn(2+).

It carries out the reaction an N-acyl-L-aspartate + H2O = a carboxylate + L-aspartate. This Prochlorococcus marinus (strain MIT 9313) protein is Probable aspartoacylase.